The primary structure comprises 226 residues: Transcription repressor OFP12 (226 aa).

Positions 68–87 (SSTFTASTSTAANSSSSSAS) are enriched in low complexity. A disordered region spans residues 68–104 (SSTFTASTSTAANSSSSSASYDDSDNYGFAPDDDSPP). The 66-residue stretch at 152-217 (VKHYVQSPDP…IRAFADILVS (66 aa)) folds into the OVATE domain.

Interacts with KNAT1, KNAT2, KNAT3 and KNAT4. Expressed in roots, shoots, stems, flower buds and siliques.

It is found in the nucleus. Its function is as follows. Transcriptional repressor that regulates multiple aspects of plant growth and development through the regulation of BEL1-LIKE (BLH) and KNOX TALE (KNAT) homeodomain transcription factors. This chain is Transcription repressor OFP12 (OFP12), found in Arabidopsis thaliana (Mouse-ear cress).